A 75-amino-acid polypeptide reads, in one-letter code: Large ribosomal subunit protein bL31 (75 aa).

It belongs to the bacterial ribosomal protein bL31 family. Type A subfamily. Part of the 50S ribosomal subunit.

Binds the 23S rRNA. The chain is Large ribosomal subunit protein bL31 from Pelodictyon phaeoclathratiforme (strain DSM 5477 / BU-1).